The primary structure comprises 317 residues: Retinol dehydrogenase 16 (317 aa).

33-57 (FITGCDSGFGNLLARQLDRRGMRVL) provides a ligand contact to NAD(+). Ser164 is a substrate binding site. Tyr176 functions as the Proton acceptor in the catalytic mechanism. The helical transmembrane segment at 289 to 308 (FFYLPMSYLPTFLVDALFYW) threads the bilayer.

Belongs to the short-chain dehydrogenases/reductases (SDR) family. In terms of assembly, homodimer. Not N-glycosylated. Liver &gt; kidney &gt; brain &gt; lung &gt; testis.

It localises to the microsome membrane. The protein resides in the endoplasmic reticulum membrane. The catalysed reaction is all-trans-retinol--[retinol-binding protein] + NAD(+) = all-trans-retinal--[retinol-binding protein] + NADH + H(+). The enzyme catalyses all-trans-retinol + NAD(+) = all-trans-retinal + NADH + H(+). It catalyses the reaction 13-cis-retinol + NAD(+) = 13-cis-retinal + NADH + H(+). It carries out the reaction 11-cis-retinol + NAD(+) = 11-cis-retinal + NADH + H(+). The catalysed reaction is 9-cis-retinol + NAD(+) = 9-cis-retinal + NADH + H(+). The enzyme catalyses 5alpha-androstane-3alpha,17beta-diol + NAD(+) = 17beta-hydroxy-5alpha-androstan-3-one + NADH + H(+). It catalyses the reaction androsterone + NAD(+) = 5alpha-androstan-3,17-dione + NADH + H(+). It participates in cofactor metabolism; retinol metabolism. Oxidoreductase with a preference for NAD. Oxidizes all-trans-retinol, 9-cis-retinol, 11-cis-retinol and 13-cis-retinol to the corresponding aldehydes. Has higher activity towards CRBP-bound retinol than with free retinol. Oxidizes 3-alpha-hydroxysteroids. Oxidizes androstanediol and androsterone to dihydrotestosterone and androstanedione. Can also catalyze the reverse reaction. The chain is Retinol dehydrogenase 16 from Rattus norvegicus (Rat).